A 530-amino-acid chain; its full sequence is Glucose-6-phosphate isomerase (530 aa).

Catalysis depends on Glu-322, which acts as the Proton donor. Active-site residues include His-351 and Lys-455.

This sequence belongs to the GPI family.

It localises to the cytoplasm. The catalysed reaction is alpha-D-glucose 6-phosphate = beta-D-fructose 6-phosphate. It participates in carbohydrate biosynthesis; gluconeogenesis. The protein operates within carbohydrate degradation; glycolysis; D-glyceraldehyde 3-phosphate and glycerone phosphate from D-glucose: step 2/4. Functionally, catalyzes the reversible isomerization of glucose-6-phosphate to fructose-6-phosphate. The chain is Glucose-6-phosphate isomerase from Geotalea daltonii (strain DSM 22248 / JCM 15807 / FRC-32) (Geobacter daltonii).